We begin with the raw amino-acid sequence, 449 residues long: UDP-N-acetylmuramoylalanine--D-glutamate ligase (449 aa).

G111–T117 contributes to the ATP binding site.

Belongs to the MurCDEF family.

The protein localises to the cytoplasm. The catalysed reaction is UDP-N-acetyl-alpha-D-muramoyl-L-alanine + D-glutamate + ATP = UDP-N-acetyl-alpha-D-muramoyl-L-alanyl-D-glutamate + ADP + phosphate + H(+). It functions in the pathway cell wall biogenesis; peptidoglycan biosynthesis. Its function is as follows. Cell wall formation. Catalyzes the addition of glutamate to the nucleotide precursor UDP-N-acetylmuramoyl-L-alanine (UMA). This chain is UDP-N-acetylmuramoylalanine--D-glutamate ligase, found in Rickettsia felis (strain ATCC VR-1525 / URRWXCal2) (Rickettsia azadi).